The primary structure comprises 734 residues: Photosystem I P700 chlorophyll a apoprotein A2 (734 aa).

The next 8 helical transmembrane spans lie at 46–69 (IFASHFGQLAIIFLWTSGNLFHVA), 135–158 (LYTGALFLLFISAIFLIAGWLHLQ), 175–199 (LNHHLSGLFGVSSLAWTGHLVHVAI), 273–291 (IAHHHLAIAFIFLVAGHMY), 330–353 (LHFQLGLALASLGVITSLVAQHMY), 369–395 (AALYTHHQYIAGFIMTGAFAHGAIFFI), 417–439 (AIISHLSWASLFLGFHTLGLYVH), and 517–535 (FLVHHAIALGLHTTTLILV). The [4Fe-4S] cluster site is built by Cys559 and Cys568. Helical transmembrane passes span 575–596 (AFYLAVFWMLNTIGWVTFYWHW) and 643–665 (LSVWAWMFLFGHLVWAIGFMFLI). Chlorophyll a-binding residues include His654, Met662, and Tyr670. Trp671 contacts phylloquinone. The chain crosses the membrane as a helical span at residues 707–727 (LVGLAHFSVGYIFTYAAFLIA).

Belongs to the PsaA/PsaB family. The PsaA/B heterodimer binds the P700 chlorophyll special pair and subsequent electron acceptors. PSI consists of a core antenna complex that captures photons, and an electron transfer chain that converts photonic excitation into a charge separation. The eukaryotic PSI reaction center is composed of at least 11 subunits. P700 is a chlorophyll a/chlorophyll a' dimer, A0 is one or more chlorophyll a, A1 is one or both phylloquinones and FX is a shared 4Fe-4S iron-sulfur center. is required as a cofactor.

Its subcellular location is the plastid. The protein resides in the chloroplast thylakoid membrane. The enzyme catalyses reduced [plastocyanin] + hnu + oxidized [2Fe-2S]-[ferredoxin] = oxidized [plastocyanin] + reduced [2Fe-2S]-[ferredoxin]. PsaA and PsaB bind P700, the primary electron donor of photosystem I (PSI), as well as the electron acceptors A0, A1 and FX. PSI is a plastocyanin-ferredoxin oxidoreductase, converting photonic excitation into a charge separation, which transfers an electron from the donor P700 chlorophyll pair to the spectroscopically characterized acceptors A0, A1, FX, FA and FB in turn. Oxidized P700 is reduced on the lumenal side of the thylakoid membrane by plastocyanin. The sequence is that of Photosystem I P700 chlorophyll a apoprotein A2 from Coffea arabica (Arabian coffee).